Reading from the N-terminus, the 596-residue chain is Phosphoenolpyruvate carboxykinase [GTP] (596 aa).

Substrate contacts are provided by residues R77 and 205–207 (YGG). The Mn(2+) site is built by K214 and H234. S256 lines the substrate pocket. 257 to 262 (ACGKTN) is a binding site for GTP. C258 is an active-site residue. D283 provides a ligand contact to Mn(2+). Residues 362-388 (KKGSTEKAAHPNSRFTAPAKNNPAISP) are disordered. 373 to 375 (NSR) is a binding site for substrate. GTP contacts are provided by residues R375, R406, and 499 to 502 (YGDN).

Belongs to the phosphoenolpyruvate carboxykinase [GTP] family. In terms of assembly, monomer. It depends on Mn(2+) as a cofactor.

Its subcellular location is the cytoplasm. The enzyme catalyses oxaloacetate + GTP = phosphoenolpyruvate + GDP + CO2. Its pathway is carbohydrate biosynthesis; gluconeogenesis. Its function is as follows. Catalyzes the conversion of oxaloacetate (OAA) to phosphoenolpyruvate (PEP), the rate-limiting step in the metabolic pathway that produces glucose from lactate and other precursors derived from the citric acid cycle. The chain is Phosphoenolpyruvate carboxykinase [GTP] from Anaeromyxobacter dehalogenans (strain 2CP-C).